A 64-amino-acid polypeptide reads, in one-letter code: Small ribosomal subunit protein eS17 (64 aa).

Belongs to the eukaryotic ribosomal protein eS17 family.

In Methanospirillum hungatei JF-1 (strain ATCC 27890 / DSM 864 / NBRC 100397 / JF-1), this protein is Small ribosomal subunit protein eS17.